We begin with the raw amino-acid sequence, 878 residues long: Pyruvate, phosphate dikinase (878 aa).

The interval 1–347 (MKKLIYYFGS…LYILQTRTAK (347 aa)) is N-terminal. ATP is bound at residue arginine 96. The tract at residues 348–404 (RTAIAAIKIAVQMVEEKLISKEQALMRIDPESLNQLLHTRIDYSKGLTSIADGLPAS) is linker 1. Residues 405-502 (PGAATGIIVF…ILKQDDIITI (98 aa)) are central. A Phosphothreonine; by PDRP1 modification is found at threonine 457. Histidine 459 functions as the Tele-phosphohistidine intermediate in the catalytic mechanism. Residues 503–537 (DGGTGKVFLGAVPLIQPTFSEESKLILEWADETSK) form a linker 2 region. Residues 538-878 (LKIRTNAETV…AAAQAKIKHG (341 aa)) form a C-terminal region. Residues arginine 565, arginine 621, glutamate 749, glycine 770, threonine 771, asparagine 772, and aspartate 773 each coordinate substrate. Glutamate 749 is a binding site for Mg(2+). Aspartate 773 provides a ligand contact to Mg(2+). Cysteine 835 (proton donor) is an active-site residue.

Belongs to the PEP-utilizing enzyme family. In terms of assembly, homodimer. Mg(2+) is required as a cofactor. In terms of processing, phosphorylation of Thr-457 in the dark inactivates the enzyme. Dephosphorylation upon light stimulation reactivates the enzyme.

It carries out the reaction pyruvate + phosphate + ATP = phosphoenolpyruvate + AMP + diphosphate + H(+). Activated by light-induced dephosphorylation. Inhibited by dark-induced phosphorylation. Both reactions are catalyzed by PDRP1. Its function is as follows. Catalyzes the reversible phosphorylation of pyruvate and phosphate. The chain is Pyruvate, phosphate dikinase (ppdK) from Rickettsia bellii (strain RML369-C).